Consider the following 350-residue polypeptide: Ornithine carbamoyltransferase, mitochondrial (350 aa).

The transit peptide at 1 to 30 directs the protein to the mitochondrion; the sequence is MLHHMRTIINASWRYGNKCIVRQFGFSQTY. Carbamoyl phosphate is bound by residues 86 to 90, R137, and H164; that span reads STRTR. R137 contacts L-ornithine. Residues N195, 259–263, 298–301, and R326 each bind L-ornithine; these read DTWVS and HCLP. C299 is an active-site residue. Residue R326 participates in carbamoyl phosphate binding.

It belongs to the aspartate/ornithine carbamoyltransferase superfamily. OTCase family. In terms of assembly, homotrimer. As to expression, liver.

The protein localises to the mitochondrion matrix. The catalysed reaction is carbamoyl phosphate + L-ornithine = L-citrulline + phosphate + H(+). Its pathway is nitrogen metabolism; urea cycle; L-citrulline from L-ornithine and carbamoyl phosphate: step 1/1. Its function is as follows. OTC is necessary for the tadpoles transition from an ammonotelic, aquatic larva to a ureotelic, terrestrial adult. This is Ornithine carbamoyltransferase, mitochondrial from Aquarana catesbeiana (American bullfrog).